The chain runs to 141 residues: Hemoglobin subunit alpha-D (141 aa).

The 141-residue stretch at 1 to 141 folds into the Globin domain; sequence MLTADDKKLI…VASVLAEKYR (141 aa). Heme b-binding residues include His-58 and His-87.

It belongs to the globin family. Heterotetramer of two alpha-D chains and two beta chains. Red blood cells.

Involved in oxygen transport from the lung to the various peripheral tissues. This is Hemoglobin subunit alpha-D (HBAD) from Rhea americana (Greater rhea).